A 437-amino-acid chain; its full sequence is Protein farnesyltransferase subunit beta (437 aa).

PFTB repeat units follow at residues alanine 123–glycine 164, arginine 174–asparagine 215, phenylalanine 222–lysine 263, leucine 270–histidine 312, and glutamine 332–glutamine 374. (2E,6E)-farnesyl diphosphate-binding positions include histidine 248 to tyrosine 251 and arginine 291 to lysine 294. The Zn(2+) site is built by aspartate 297 and cysteine 299. Position 300–303 (tyrosine 300–tryptophan 303) interacts with (2E,6E)-farnesyl diphosphate. Histidine 362 contacts Zn(2+). Position 432 is a phosphoserine (serine 432). Threonine 436 bears the Phosphothreonine mark.

It belongs to the protein prenyltransferase subunit beta family. In terms of assembly, heterodimer of FNTA and FNTB. Zn(2+) is required as a cofactor.

The enzyme catalyses L-cysteinyl-[protein] + (2E,6E)-farnesyl diphosphate = S-(2E,6E)-farnesyl-L-cysteinyl-[protein] + diphosphate. In terms of biological role, essential subunit of the farnesyltransferase complex. Catalyzes the transfer of a farnesyl moiety from farnesyl diphosphate to a cysteine at the fourth position from the C-terminus of several proteins having the C-terminal sequence Cys-aliphatic-aliphatic-X. The chain is Protein farnesyltransferase subunit beta (Fntb) from Rattus norvegicus (Rat).